Consider the following 475-residue polypeptide: MSSPNIWSTGSSVYSTPVFSQKMTVWILLLLSLYPGFTSQKSDDDYEDYASNKTWVLTPKVPEGDVTVILNNLLEGYDNKLRPDIGVKPTLIHTDMYVNSIGPVNAINMEYTIDIFFAQTWYDRRLKFNSTIKVLRLNSNMVGKIWIPDTFFRNSKKADAHWITTPNRMLRIWNDGRVLYTLRLTIDAECQLQLHNFPMDEHSCPLEFSSYGYPREEIVYQWKRSSVEVGDTRSWRLYQFSFVGLRNTTEVVKTTSGDYVVMSVYFDLSRRMGYFTIQTYIPCTLIVVLSWVSFWINKDAVPARTSLGITTVLTMTTLSTIARKSLPKVSYVTAMDLFVSVCFIFVFSALVEYGTLHYFVSNRKPSKDKDKKKKNPLLRMFSFKAPTIDIRPRSATIQMNNATHLQERDEEYGYECLDGKDCASFFCCFEDCRTGAWRHGRIHIRIAKMDSYARIFFPTAFCLFNLVYWVSYLYL.

Residues 1 to 39 (MSSPNIWSTGSSVYSTPVFSQKMTVWILLLLSLYPGFTS) form the signal peptide. Residues 40 to 275 (QKSDDDYEDY…FDLSRRMGYF (236 aa)) are Extracellular-facing. N-linked (GlcNAc...) asparagine glycans are attached at residues asparagine 52 and asparagine 129. A disulfide bridge links cysteine 190 with cysteine 204. Asparagine 247 is a glycosylation site (N-linked (GlcNAc...) asparagine). Residues 276–296 (TIQTYIPCTLIVVLSWVSFWI) form a helical membrane-spanning segment. Residues 297 to 302 (NKDAVP) lie on the Cytoplasmic side of the membrane. Residues 303–322 (ARTSLGITTVLTMTTLSTIA) form a helical membrane-spanning segment. Residues 323-334 (RKSLPKVSYVTA) lie on the Extracellular side of the membrane. A helical membrane pass occupies residues 335–359 (MDLFVSVCFIFVFSALVEYGTLHYF). At 360-451 (VSNRKPSKDK…IHIRIAKMDS (92 aa)) the chain is on the cytoplasmic side. The segment at 433 to 450 (RTGAWRHGRIHIRIAKMD) is interaction with GABARAP. Residues 452-472 (YARIFFPTAFCLFNLVYWVSY) form a helical membrane-spanning segment. At 473-475 (LYL) the chain is on the extracellular side.

It belongs to the ligand-gated ion channel (TC 1.A.9) family. Gamma-aminobutyric acid receptor (TC 1.A.9.5) subfamily. GABRG2 sub-subfamily. In terms of assembly, heteropentamer, formed by a combination of alpha (GABRA1-6), beta (GABRB1-3), gamma (GABRG1-3), delta (GABRD), epsilon (GABRE), rho (GABRR1-3), pi (GABRP) and theta (GABRQ) chains, each subunit exhibiting distinct physiological and pharmacological properties. Interacts with GABARAP. Interacts with KIF21B. Identified in a complex of 720 kDa composed of LHFPL4, NLGN2, GABRA1, GABRB2, GABRG2 and GABRB3. Interacts with LHFPL4. Interacts with SHISA7; interaction leads to the regulation of GABA(A) receptor trafficking, channel deactivation kinetics and pharmacology. In terms of processing, palmitoylated by ZDHHC3/GODZ; required for the accumulation of GABA(A) receptors at the postsynaptic membrane of inhibitory GABAergic synapses.

The protein resides in the postsynaptic cell membrane. Its subcellular location is the cell membrane. The protein localises to the cell projection. It localises to the dendrite. It is found in the cytoplasmic vesicle membrane. The catalysed reaction is chloride(in) = chloride(out). Allosterically activated by benzodiazepines. Activated by pentobarbital. Potentiated by etomidate, propofol, pregnanolone. Inhibited by the antagonist bicuculline. Inhibited by zinc ions. Potentiated by histamine. Gamma subunit of the heteropentameric ligand-gated chloride channel gated by gamma-aminobutyric acid (GABA), a major inhibitory neurotransmitter in the brain. GABA-gated chloride channels, also named GABA(A) receptors (GABAAR), consist of five subunits arranged around a central pore and contain GABA active binding site(s) located at the alpha and beta subunit interface(s). When activated by GABA, GABAARs selectively allow the flow of chloride anions across the cell membrane down their electrochemical gradient. Gamma-2/GABRG2-containing GABAARs are found at both synaptic and extrasynaptic sites. Chloride influx into the postsynaptic neuron following GABAAR opening decreases the neuron ability to generate a new action potential, thereby reducing nerve transmission. GABAARs containing alpha-1 and beta-2 or -3 subunits exhibit synaptogenic activity; the gamma-2 subunit being necessary but not sufficient to induce rapid synaptic contacts formation. Extrasynaptic gamma-2-containing receptors contribute to the tonic GABAergic inhibition. GABAARs function also as histamine receptor where histamine binds at the interface of two neighboring beta subunits and potentiates GABA response in a gamma-2 subunit-controlled manner. The polypeptide is Gamma-aminobutyric acid receptor subunit gamma-2 (Homo sapiens (Human)).